A 214-amino-acid polypeptide reads, in one-letter code: MLELSKIHNLRREYISKQFRRSNLTKNPMHLFSKWLYEAYCQIPDPNAMCLSTVDHTGQPFQRLVLLKYFNDKTIVFFTHLNSRKAIHINNNPKISLCFPWNIINRQIIITGSVYKISKKEAQKYFYTRPKNNQISTWASKQSTIISSKKVLKNKFLKLKKKYFQKSVPFPHFWVGYKININSMEFWQGGIYRLHDRFLYKKNKKKWYINRLSP.

Substrate-binding positions include 11 to 14 (RREY) and Lys-68. FMN-binding positions include 63 to 68 (RLVLLK), 78 to 79 (FT), Arg-84, Lys-85, and Gln-107. 2 residues coordinate substrate: Tyr-125 and Arg-129. FMN is bound by residues 142–143 (QS) and Trp-187. 193 to 195 (RLH) contributes to the substrate binding site. Arg-197 contributes to the FMN binding site.

Belongs to the pyridoxamine 5'-phosphate oxidase family. Homodimer. The cofactor is FMN.

The catalysed reaction is pyridoxamine 5'-phosphate + O2 + H2O = pyridoxal 5'-phosphate + H2O2 + NH4(+). It catalyses the reaction pyridoxine 5'-phosphate + O2 = pyridoxal 5'-phosphate + H2O2. The protein operates within cofactor metabolism; pyridoxal 5'-phosphate salvage; pyridoxal 5'-phosphate from pyridoxamine 5'-phosphate: step 1/1. Its pathway is cofactor metabolism; pyridoxal 5'-phosphate salvage; pyridoxal 5'-phosphate from pyridoxine 5'-phosphate: step 1/1. Catalyzes the oxidation of either pyridoxine 5'-phosphate (PNP) or pyridoxamine 5'-phosphate (PMP) into pyridoxal 5'-phosphate (PLP). In Blochmanniella floridana, this protein is Pyridoxine/pyridoxamine 5'-phosphate oxidase.